The primary structure comprises 452 residues: Trigger factor (452 aa).

The PPIase FKBP-type domain maps to 171–256; that stretch reads GDRVTLAFKG…ATLIEAPQDA (86 aa).

This sequence belongs to the FKBP-type PPIase family. Tig subfamily.

It localises to the cytoplasm. The enzyme catalyses [protein]-peptidylproline (omega=180) = [protein]-peptidylproline (omega=0). Involved in protein export. Acts as a chaperone by maintaining the newly synthesized protein in an open conformation. Functions as a peptidyl-prolyl cis-trans isomerase. The sequence is that of Trigger factor from Afipia carboxidovorans (strain ATCC 49405 / DSM 1227 / KCTC 32145 / OM5) (Oligotropha carboxidovorans).